A 311-amino-acid chain; its full sequence is Probable porphobilinogen deaminase (311 aa).

Cysteine 237 is subject to S-(dipyrrolylmethanemethyl)cysteine. Residues 270–289 form a disordered region; the sequence is SKTGDKNNPKSLGQSAGEEL.

Belongs to the HMBS family. Dipyrromethane is required as a cofactor.

It catalyses the reaction 4 porphobilinogen + H2O = hydroxymethylbilane + 4 NH4(+). Its pathway is porphyrin-containing compound metabolism; protoporphyrin-IX biosynthesis; coproporphyrinogen-III from 5-aminolevulinate: step 2/4. In terms of biological role, tetrapolymerization of the monopyrrole PBG into the hydroxymethylbilane pre-uroporphyrinogen in several discrete steps. The polypeptide is Probable porphobilinogen deaminase (Nitrosopumilus maritimus (strain SCM1)).